Reading from the N-terminus, the 350-residue chain is Biotin synthase (350 aa).

In terms of domain architecture, Radical SAM core spans 41–268 (NEVQISRLLS…KSRVRLSAGR (228 aa)). Cysteine 56, cysteine 60, and cysteine 63 together coordinate [4Fe-4S] cluster. Positions 100, 131, 191, and 263 each coordinate [2Fe-2S] cluster.

The protein belongs to the radical SAM superfamily. Biotin synthase family. In terms of assembly, homodimer. It depends on [4Fe-4S] cluster as a cofactor. Requires [2Fe-2S] cluster as cofactor.

It catalyses the reaction (4R,5S)-dethiobiotin + (sulfur carrier)-SH + 2 reduced [2Fe-2S]-[ferredoxin] + 2 S-adenosyl-L-methionine = (sulfur carrier)-H + biotin + 2 5'-deoxyadenosine + 2 L-methionine + 2 oxidized [2Fe-2S]-[ferredoxin]. It participates in cofactor biosynthesis; biotin biosynthesis; biotin from 7,8-diaminononanoate: step 2/2. Functionally, catalyzes the conversion of dethiobiotin (DTB) to biotin by the insertion of a sulfur atom into dethiobiotin via a radical-based mechanism. The protein is Biotin synthase of Shewanella halifaxensis (strain HAW-EB4).